Reading from the N-terminus, the 501-residue chain is UDP-N-acetylmuramoyl-L-alanyl-D-glutamate--2,6-diaminopimelate ligase (501 aa).

Serine 29 is a binding site for UDP-N-acetyl-alpha-D-muramoyl-L-alanyl-D-glutamate. 112–118 (GTNGKTS) contributes to the ATP binding site. UDP-N-acetyl-alpha-D-muramoyl-L-alanyl-D-glutamate contacts are provided by residues 161–162 (TT), serine 188, and arginine 196. Lysine 228 carries the post-translational modification N6-carboxylysine. Residues arginine 393, 417–420 (DNPR), glycine 468, and glutamate 472 each bind meso-2,6-diaminopimelate. Residues 417-420 (DNPR) carry the Meso-diaminopimelate recognition motif motif.

It belongs to the MurCDEF family. MurE subfamily. It depends on Mg(2+) as a cofactor. In terms of processing, carboxylation is probably crucial for Mg(2+) binding and, consequently, for the gamma-phosphate positioning of ATP.

It is found in the cytoplasm. It carries out the reaction UDP-N-acetyl-alpha-D-muramoyl-L-alanyl-D-glutamate + meso-2,6-diaminopimelate + ATP = UDP-N-acetyl-alpha-D-muramoyl-L-alanyl-gamma-D-glutamyl-meso-2,6-diaminopimelate + ADP + phosphate + H(+). It participates in cell wall biogenesis; peptidoglycan biosynthesis. Catalyzes the addition of meso-diaminopimelic acid to the nucleotide precursor UDP-N-acetylmuramoyl-L-alanyl-D-glutamate (UMAG) in the biosynthesis of bacterial cell-wall peptidoglycan. The polypeptide is UDP-N-acetylmuramoyl-L-alanyl-D-glutamate--2,6-diaminopimelate ligase (Acidovorax sp. (strain JS42)).